A 652-amino-acid polypeptide reads, in one-letter code: DNA mismatch repair protein MutL (652 aa).

This sequence belongs to the DNA mismatch repair MutL/HexB family.

This protein is involved in the repair of mismatches in DNA. It is required for dam-dependent methyl-directed DNA mismatch repair. May act as a 'molecular matchmaker', a protein that promotes the formation of a stable complex between two or more DNA-binding proteins in an ATP-dependent manner without itself being part of a final effector complex. The sequence is that of DNA mismatch repair protein MutL from Aliivibrio salmonicida (strain LFI1238) (Vibrio salmonicida (strain LFI1238)).